Consider the following 108-residue polypeptide: UPF0060 membrane protein BLi00854/BL03049 (108 aa).

Helical transmembrane passes span 3–23 (IAIG…YLVW), 31–51 (PLWY…IPAF), 60–80 (VYAA…WLVD), and 86–106 (LYDW…LWAP).

The protein belongs to the UPF0060 family.

The protein resides in the cell membrane. This is UPF0060 membrane protein BLi00854/BL03049 from Bacillus licheniformis (strain ATCC 14580 / DSM 13 / JCM 2505 / CCUG 7422 / NBRC 12200 / NCIMB 9375 / NCTC 10341 / NRRL NRS-1264 / Gibson 46).